A 170-amino-acid polypeptide reads, in one-letter code: Putative 5'(3')-deoxyribonucleotidase (170 aa).

Aspartate 28 functions as the Nucleophile in the catalytic mechanism. Residues aspartate 28, aspartate 30, and aspartate 134 each contribute to the Mg(2+) site. Aspartate 30 functions as the Proton donor in the catalytic mechanism.

The protein belongs to the 5'(3')-deoxyribonucleotidase family. Mg(2+) is required as a cofactor.

Its function is as follows. Dephosphorylates the 5' and 2'(3')-phosphates of deoxyribonucleotides. The polypeptide is Putative 5'(3')-deoxyribonucleotidase (Vibrio parahaemolyticus (KVP40)).